Consider the following 742-residue polypeptide: Phosphoribosylformylglycinamidine synthase subunit PurL (742 aa).

Histidine 54 is an active-site residue. 2 residues coordinate ATP: tyrosine 57 and lysine 96. Glutamate 98 lines the Mg(2+) pocket. Residues serine 99–histidine 102 and arginine 121 contribute to the substrate site. Histidine 100 serves as the catalytic Proton acceptor. A Mg(2+)-binding site is contributed by aspartate 122. Glutamine 245 provides a ligand contact to substrate. Aspartate 273 is a Mg(2+) binding site. Substrate is bound at residue glutamate 317–glutamine 319. Residues aspartate 500 and glycine 537 each coordinate ATP. Asparagine 538 is a binding site for Mg(2+). Substrate is bound at residue serine 540.

Belongs to the FGAMS family. As to quaternary structure, monomer. Part of the FGAM synthase complex composed of 1 PurL, 1 PurQ and 2 PurS subunits.

Its subcellular location is the cytoplasm. The enzyme catalyses N(2)-formyl-N(1)-(5-phospho-beta-D-ribosyl)glycinamide + L-glutamine + ATP + H2O = 2-formamido-N(1)-(5-O-phospho-beta-D-ribosyl)acetamidine + L-glutamate + ADP + phosphate + H(+). It participates in purine metabolism; IMP biosynthesis via de novo pathway; 5-amino-1-(5-phospho-D-ribosyl)imidazole from N(2)-formyl-N(1)-(5-phospho-D-ribosyl)glycinamide: step 1/2. Its function is as follows. Part of the phosphoribosylformylglycinamidine synthase complex involved in the purines biosynthetic pathway. Catalyzes the ATP-dependent conversion of formylglycinamide ribonucleotide (FGAR) and glutamine to yield formylglycinamidine ribonucleotide (FGAM) and glutamate. The FGAM synthase complex is composed of three subunits. PurQ produces an ammonia molecule by converting glutamine to glutamate. PurL transfers the ammonia molecule to FGAR to form FGAM in an ATP-dependent manner. PurS interacts with PurQ and PurL and is thought to assist in the transfer of the ammonia molecule from PurQ to PurL. The sequence is that of Phosphoribosylformylglycinamidine synthase subunit PurL from Bacillus velezensis (strain DSM 23117 / BGSC 10A6 / LMG 26770 / FZB42) (Bacillus amyloliquefaciens subsp. plantarum).